Here is a 354-residue protein sequence, read N- to C-terminus: Ion-translocating oxidoreductase complex subunit D (354 aa).

The next 3 helical transmembrane spans lie at 9-28 (IMLHVCLALLPTTAWGLYLF), 67-87 (LLSGWLLALTLPPWAPWWIAV), and 117-137 (VALLIAFPLQMTTWALPLPLG). T165 carries the FMN phosphoryl threonine modification. A run of 5 helical transmembrane segments spans residues 200–220 (GSLGETSELLILLGGLWLLAL), 222–242 (IIHWEIPLGMLLTVGALAALA), 249–269 (VHGGGLFHLTSGGLLLGALFI), 277–297 (PISRSGRLIFAIGCGALVFVI), and 301–321 (GNFPEAVAFAVLLMNALVPLI).

It belongs to the NqrB/RnfD family. The complex is composed of six subunits: RnfA, RnfB, RnfC, RnfD, RnfE and RnfG. FMN serves as cofactor.

Its subcellular location is the cell inner membrane. Functionally, part of a membrane-bound complex that couples electron transfer with translocation of ions across the membrane. This chain is Ion-translocating oxidoreductase complex subunit D, found in Stutzerimonas stutzeri (Pseudomonas stutzeri).